Here is a 210-residue protein sequence, read N- to C-terminus: Putative 3-methyladenine DNA glycosylase (210 aa).

Residues Ser180 to Pro210 are disordered. A compositionally biased stretch (low complexity) spans Ala186–Ala196. Residues Arg201–Pro210 show a composition bias toward basic residues.

It belongs to the DNA glycosylase MPG family.

The chain is Putative 3-methyladenine DNA glycosylase from Anaeromyxobacter dehalogenans (strain 2CP-1 / ATCC BAA-258).